Reading from the N-terminus, the 524-residue chain is Alanine aminotransferase 2 (524 aa).

An N6-(pyridoxal phosphate)lysine modification is found at K342.

The protein belongs to the class-I pyridoxal-phosphate-dependent aminotransferase family. Alanine aminotransferase subfamily. In terms of assembly, homodimer. Pyridoxal 5'-phosphate serves as cofactor.

It catalyses the reaction L-alanine + 2-oxoglutarate = pyruvate + L-glutamate. The protein operates within amino-acid degradation; L-alanine degradation via transaminase pathway; pyruvate from L-alanine: step 1/1. Catalyzes the reversible transamination between alanine and 2-oxoglutarate to form pyruvate and glutamate. The sequence is that of Alanine aminotransferase 2 (gpt2) from Xenopus tropicalis (Western clawed frog).